A 284-amino-acid chain; its full sequence is 2,3,4,5-tetrahydropyridine-2,6-dicarboxylate N-succinyltransferase (284 aa).

Substrate is bound by residues R111 and D148.

Belongs to the transferase hexapeptide repeat family. Homotrimer.

It is found in the cytoplasm. The enzyme catalyses (S)-2,3,4,5-tetrahydrodipicolinate + succinyl-CoA + H2O = (S)-2-succinylamino-6-oxoheptanedioate + CoA. It participates in amino-acid biosynthesis; L-lysine biosynthesis via DAP pathway; LL-2,6-diaminopimelate from (S)-tetrahydrodipicolinate (succinylase route): step 1/3. This is 2,3,4,5-tetrahydropyridine-2,6-dicarboxylate N-succinyltransferase from Brucella suis (strain ATCC 23445 / NCTC 10510).